A 572-amino-acid polypeptide reads, in one-letter code: Putative lysozyme-like protein (572 aa).

The signal sequence occupies residues 1–17 (MRLLLVLLALIFSVVSA). A compositionally biased stretch (low complexity) spans 145 to 165 (MSSSGSSSSSGSSGSSSSSSG). Disordered regions lie at residues 145–199 (MSSS…HGGG), 231–297 (SSSS…GGGV), 326–388 (ANSV…GERK), and 433–469 (AGSS…GGSG). Positions 166-185 (SSGGGSSGGGSGGGGGGSGL) are enriched in gly residues. Residues 231–240 (SSSSADAGSS) are compositionally biased toward low complexity. Positions 258–282 (STGGTGGSSGSSGGGSGGGGGGSGL) are enriched in gly residues. The segment covering 326-358 (ANSVSSLAGSMSSSGSSSSSGSSGSSSSSSSSG) has biased composition (low complexity). Positions 359–382 (SSGGSSGGGSSGGGSGGGGGGSGL) are enriched in gly residues. Positions 433–452 (AGSSSSSGSSGSSSSSSSSG) are enriched in low complexity. Over residues 453–469 (SSGGSSGGSSGGGGGSG) the composition is skewed to gly residues.

The protein belongs to the dictyostelium lysozyme family.

In Dictyostelium discoideum (Social amoeba), this protein is Putative lysozyme-like protein (alyL).